The following is a 399-amino-acid chain: Centrosomal protein 43 (399 aa).

A LisH domain is found at 70-102; the sequence is DGRLVASLVAEFLQFFNLDFTLAVFQPETSTFQ. Threonine 143 carries the post-translational modification Phosphothreonine. Residues 143 to 311 are disordered; sequence TSGEGALDLS…LKESESKRGN (169 aa). Residues serine 152, serine 156, serine 160, and serine 202 each carry the phosphoserine modification. A compositionally biased stretch (low complexity) spans 197–209; that stretch reads NDASHSDTSISSS. Acidic residues predominate over residues 245-256; the sequence is PEEDDLEGDSFF. The segment covering 286 to 302 has biased composition (low complexity); that stretch reads APPLKSGLSSLAGAPSL. 2 positions are modified to phosphoserine: serine 301 and serine 326. Positions 328–357 are disordered; the sequence is GLGTGEEDDYVDDFNSTSHRSEKSELSIGE. Tyrosine 337 carries the phosphotyrosine modification.

This sequence belongs to the CEP43 family. Homodimer. Part of a ternary complex that contains CEP350, CEP43 and MAPRE1. Interacts directly with CEP350 and MAPRE1. Interacts with CEP19. Interacts (via N-terminus) with CEP350 (via C-terminus).

Its subcellular location is the cytoplasm. The protein resides in the cytoskeleton. The protein localises to the microtubule organizing center. It is found in the centrosome. It localises to the centriole. Its subcellular location is the cilium basal body. In terms of biological role, required for anchoring microtubules to the centrosomes. Required for ciliation. This Bos taurus (Bovine) protein is Centrosomal protein 43 (CEP43).